A 1060-amino-acid polypeptide reads, in one-letter code: Anoctamin-8 (1060 aa).

A disordered region spans residues 1-32 (MAEAASGAGDVTLEGERGKRPPPEGEPAAPAS). A2 is modified (N-acetylalanine). Residues 2–244 (AEAASGAGDV…DDICDYFGVK (243 aa)) are Cytoplasmic-facing. Positions 14–23 (EGERGKRPPP) are enriched in basic and acidic residues. A helical membrane pass occupies residues 245–265 (IAMYFAWLGFYTSAMVYPAVF). Residues 266-281 (GSVLYTFTEADQTSRD) are Extracellular-facing. Residues 282–302 (VSCVVFALFNVIWSTLFLEEW) form a helical membrane-spanning segment. Over 303–356 (KRRGAELAYKWGTLDSPGEAVEEPRPQFRGIRRISPITRAEEFYYPPWKRLLFQ) the chain is Cytoplasmic. A Phosphoserine modification is found at S318. The chain crosses the membrane as a helical span at residues 357–377 (LLVSLPLCLACLICVFILMLG). The Extracellular portion of the chain corresponds to 378–400 (CFQLQELVLSVKGLPRLVRFLPK). A helical membrane pass occupies residues 401–421 (VMLALLVSVSAEGYKKLAVWL). Over 422–437 (NDMENYRLESTYERHL) the chain is Cytoplasmic. The helical transmembrane segment at 438 to 458 (IIKVVLFQFVNSYLSLFYIGF) threads the bilayer. Residues 459-745 (YLKDMDRLKE…YEDTFQDYQE (287 aa)) are Extracellular-facing. Disordered stretches follow at residues 529 to 605 (AQAD…SLLD), 619 to 640 (GAGR…SPTM), 653 to 672 (AEED…EPQT), and 680 to 723 (GEGR…HSPQ). The segment covering 534–547 (GGAGSRRCLGGGCG) has biased composition (gly residues). Composition is skewed to acidic residues over residues 549–559 (PEEENEEEEEA) and 581–602 (EEDE…EEGS). At S665 the chain carries Phosphoserine. Residues 680–694 (GEGRDQGPDGDRDTE) are compositionally biased toward basic and acidic residues. A glycan (N-linked (GlcNAc...) asparagine) is linked at N708. The helical transmembrane segment at 746–766 (MFVQFGYVVLFSSAFPLAALC) threads the bilayer. At 767–802 (ALVNNLIEIRSDAFKLCTGLQRPFGRRVESIGQWQK) the chain is on the cytoplasmic side. S796 carries the phosphoserine modification. The helical transmembrane segment at 803 to 823 (VMEAMGVLAIVVNCYLIGQCG) threads the bilayer. At 824 to 836 (QLQRLFPWLSPEA) the chain is on the extracellular side. A helical transmembrane segment spans residues 837-857 (AIVSVVVLEHLALLVKYLIHV). Residues 858-1060 (AIPDIPGWVA…PRPEDAGHRP (203 aa)) are Cytoplasmic-facing. The interval 884 to 1060 (HERQAQQRFQ…PRPEDAGHRP (177 aa)) is disordered. Basic and acidic residues-rich tracts occupy residues 899–927 (RREE…EARA) and 935–950 (VAER…ERPR). A compositionally biased stretch (pro residues) spans 972–986 (TRPPAPTGCAPPPRS). R991 carries the post-translational modification Asymmetric dimethylarginine; alternate. An Omega-N-methylarginine; alternate modification is found at R991. An Omega-N-methylarginine modification is found at R999. Positions 1049–1060 (PEPRPEDAGHRP) are enriched in basic and acidic residues.

Belongs to the anoctamin family. Predominant expression seen in epithelial tissues.

It localises to the cell membrane. Does not exhibit calcium-activated chloride channel (CaCC) activity. This is Anoctamin-8 (Ano8) from Mus musculus (Mouse).